We begin with the raw amino-acid sequence, 589 residues long: Aspartate--tRNA(Asp/Asn) ligase (589 aa).

Glutamate 176 serves as a coordination point for L-aspartate. An aspartate region spans residues 200 to 203 (QLFK). Position 222 (arginine 222) interacts with L-aspartate. ATP-binding positions include 222-224 (RDE) and glutamine 231. Histidine 450 lines the L-aspartate pocket. Glutamate 484 serves as a coordination point for ATP. Residue arginine 491 coordinates L-aspartate. 536-539 (GLDR) contributes to the ATP binding site.

The protein belongs to the class-II aminoacyl-tRNA synthetase family. Type 1 subfamily. In terms of assembly, homodimer.

It localises to the cytoplasm. It carries out the reaction tRNA(Asx) + L-aspartate + ATP = L-aspartyl-tRNA(Asx) + AMP + diphosphate. In terms of biological role, aspartyl-tRNA synthetase with relaxed tRNA specificity since it is able to aspartylate not only its cognate tRNA(Asp) but also tRNA(Asn). Reaction proceeds in two steps: L-aspartate is first activated by ATP to form Asp-AMP and then transferred to the acceptor end of tRNA(Asp/Asn). The sequence is that of Aspartate--tRNA(Asp/Asn) ligase from Bacillus cytotoxicus (strain DSM 22905 / CIP 110041 / 391-98 / NVH 391-98).